A 5478-amino-acid polypeptide reads, in one-letter code: Mucin-12 (5478 aa).

Residues 1–16 (MLVIWILTLALRLCAS) form the signal peptide. At 17–5380 (VTTVTPEGSA…EFNIAKSLVY (5364 aa)) the chain is on the extracellular side. N-linked (GlcNAc...) asparagine glycans are attached at residues asparagine 154, asparagine 170, and asparagine 176. The tract at residues 212 to 737 (LDSSTNSGHS…GSTETTLLPD (526 aa)) is disordered. The stretch at 222–240 (EESTVSHSGPGATGTTLFP) is repeat 1. The 28 X 19 AA approximate tandem repeats of E-E-S-X-X-X-H-X-X-P-X-X-T-X-T-X-X-X-P stretch occupies residues 222 to 4761 (EESTVSHSGP…PGSTQTMHFP (4540 aa)). 4 stretches are compositionally biased toward polar residues: residues 226–246 (VSHS…SATS), 255–288 (SPIT…SSPR), 296–313 (PART…TSHS), and 325–342 (DSTT…SHSI). Residues 343 to 366 (PGSTDTTLSPGTTTPSSLGPESTT) are compositionally biased toward low complexity. Positions 367 to 387 (FHSSPGYTKTTRLPDNTTTSG) are enriched in polar residues. An N-linked (GlcNAc...) asparagine glycan is attached at asparagine 382. The span at 396-413 (HSSTGSPHTTLSPSSSTT) shows a compositional bias: low complexity. Residues 419-440 (TTFQSWPSSKDTSPAPSGTTSA) are compositionally biased toward polar residues. 2 stretches are compositionally biased toward low complexity: residues 445–466 (STTY…SSTT) and 478–495 (SSPV…SATS). Tandem repeats lie at residues 471-489 (EEST…TPPP) and 499-517 (EEST…MHFP). Residues 531–554 (TFHGSTTHTKSSTPSTTAALAHTS) show a composition bias toward low complexity. 2 stretches are compositionally biased toward polar residues: residues 555 to 575 (YHSS…TISG) and 608 to 648 (STPS…SPDT). Positions 654–669 (SMTSSGVSEESTTSHS) are enriched in low complexity. Copy 4 of the repeat occupies 662-680 (EESTTSHSRPGSTHTTAFP). 2 stretches are compositionally biased toward polar residues: residues 670-715 (RPGS…TASS) and 722-737 (TFHS…LLPD). N-linked (GlcNAc...) asparagine glycosylation is present at asparagine 738. 4 disordered regions span residues 749-4847 (MPVH…HFTT), 4887-5034 (SSRS…THTV), 5048-5071 (STAF…TASD), and 5093-5112 (ASSS…TSPS). 2 stretches are compositionally biased toward polar residues: residues 751 to 783 (VHSS…WPSS) and 792 to 842 (TTTS…TQTM). Residues 827–845 (EESTTYHSSPGSTQTMHFP) form repeat 5. Residues 859–877 (TSHSSTTHTISSAPSTTSA) show a composition bias toward low complexity. Polar residues-rich tracts occupy residues 884–899 (SYHS…HFPD) and 928–970 (RSTT…TTFH). The segment covering 971–1007 (SSPRSPATTLSPASTTSSGVSEESTTSRSRPGSTHTT) has biased composition (low complexity). A compositionally biased stretch (polar residues) spans 1009 to 1021 (FPDSTTTPGLSRH). Residues 1022–1065 (STTSHSSPGSTDTTLLPASTTTSGPSQESTTSHSSSGSTDTALS) are compositionally biased toward low complexity. Composition is skewed to polar residues over residues 1066-1101 (PGST…TSSG) and 1108-1138 (RVHS…TAFQ). The segment covering 1139–1157 (THPASTHTTPSPPSTATAP) has biased composition (low complexity). Copy 6 of the repeat occupies 1159-1177 (EESTTYHRSPGSTPTTHFP). 2 stretches are compositionally biased toward polar residues: residues 1160–1184 (ESTT…TTSG) and 1191–1207 (IFHS…SSAH). Composition is skewed to low complexity over residues 1208-1220 (STTS…TTSR), 1229-1241 (TTLP…PGLS), and 1249-1262 (SSPR…SPAS). Polar residues-rich tracts occupy residues 1271 to 1324 (ESTT…TTSV), 1331 to 1357 (TFHS…TEES), and 1364 to 1377 (PAST…TLTT). Low complexity-rich tracts occupy residues 1384 to 1396 (STTF…STGT) and 1411 to 1438 (ESTP…SLSE). A compositionally biased stretch (polar residues) spans 1439–1448 (KSTTFYTSPR). Residues 1458–1481 (TTTSSGVSEESSTSHSQPGSTHTT) are compositionally biased toward low complexity. Repeat unit 7 spans residues 1466 to 1484 (EESSTSHSQPGSTHTTAFP). Over residues 1483–1537 (FPDSTTTSDLSQEPTTSHSSQGSTEATLSPGSTTASSLGQQSTTFHSSPGDTETT) the composition is skewed to polar residues. The segment covering 1552–1568 (STPTHSSTGSLHTTLTP) has biased composition (low complexity). 2 stretches are compositionally biased toward polar residues: residues 1569 to 1586 (ASST…FQSW) and 1606 to 1630 (VSTT…TTLG). Repeat 8 spans residues 1633–1651 (EESTTVHSSPGATGTALFP). Over residues 1653–1708 (RSATSVLVGEPTTSPISSGSTETTALPGSTTTAGLSEKSTTFYSSPRSPDTTLSPA) the composition is skewed to polar residues. Over residues 1709-1724 (STTSSGVSEESTTSHS) the composition is skewed to low complexity. Copy 9 of the repeat occupies 1717–1735 (EESTTSHSRPGSTHTTAFP). 2 stretches are compositionally biased toward polar residues: residues 1725-1797 (RPGS…TTAS) and 1805-1840 (PVHS…SSKD). Residue asparagine 1793 is glycosylated (N-linked (GlcNAc...) asparagine). Composition is skewed to low complexity over residues 1856-1877 (STTS…SSTT) and 1889-1906 (SSPV…STTS). 2 tandem repeats follow at residues 1882–1900 (EEST…TPSP) and 1910–1928 (EEST…MHFP). Positions 1914-1935 (AYHSSPGSTQTMHFPESSTASG) are enriched in polar residues. The span at 1943 to 1959 (SHSSTTHTISSPPSTTS) shows a compositional bias: low complexity. Polar residues-rich tracts occupy residues 1967–1982 (SYHS…HFPD) and 2011–2053 (RSTT…TTFH). The segment covering 2054-2082 (SSPRSPATTLSPASTTSSGVSEESTTSHS) has biased composition (low complexity). The stretch at 2075–2093 (EESTTSHSRPGSTHTTAFP) is repeat 12. Over residues 2083 to 2104 (RPGSTHTTAFPDSTTTPGLSRH) the composition is skewed to polar residues. Residues 2105–2130 (STTSHSSPGSTDTTLLPASTTTSGPS) are compositionally biased toward low complexity. Polar residues-rich tracts occupy residues 2131–2184 (QEST…TSSG) and 2191–2221 (RVHS…TAFQ). A compositionally biased stretch (low complexity) spans 2222–2240 (THPASTHTTPSPPSTATAP). Residues 2242–2260 (EESTTYHRSPGSTPTTHFP) form repeat 13. 2 stretches are compositionally biased toward polar residues: residues 2243–2267 (ESTT…TTSG) and 2274–2290 (IFHS…SSAH). 3 stretches are compositionally biased toward low complexity: residues 2291-2303 (STTS…TTSR), 2312-2324 (TTLP…PGLS), and 2332-2345 (SSPR…SPAS). A compositionally biased stretch (polar residues) spans 2354–2392 (ESTTSRSQPGSTHSTVSPASTTTPGLSEESTTVYSSSPG). Residues 2393–2407 (STETTVFPRTPTTSV) are compositionally biased toward low complexity. Composition is skewed to polar residues over residues 2414 to 2440 (TFHS…TEES) and 2447 to 2460 (PAST…TLTT). 2 stretches are compositionally biased toward low complexity: residues 2467–2483 (STTF…TLSP) and 2494–2521 (ESTP…SLSE). Polar residues predominate over residues 2522–2531 (KSTTFYTSPR). Residues 2541 to 2564 (TTTSSGVSEESSTSHSQPGSTHTT) show a composition bias toward low complexity. Repeat 14 spans residues 2549-2567 (EESSTSHSQPGSTHTTAFP). Polar residues predominate over residues 2566–2578 (FPDSTTTPGLSRH). The segment covering 2579 to 2604 (STTSHSSPGSTDTTLLPASTTTSGPS) has biased composition (low complexity). Composition is skewed to polar residues over residues 2605–2658 (QEST…TSSG) and 2665–2695 (RVHS…TTFQ). A compositionally biased stretch (low complexity) spans 2696–2714 (THPASTHTTPSPPSTATAP). Repeat unit 15 spans residues 2716-2734 (EESTTYHRSPGSTPTTHFP). Composition is skewed to polar residues over residues 2717–2741 (ESTT…TTSG) and 2748–2764 (IFHS…SSAH). Low complexity-rich tracts occupy residues 2765–2777 (STTS…TTSR), 2786–2798 (TTLP…PGLS), and 2806–2819 (SSPR…SPAS). Polar residues-rich tracts occupy residues 2828–2881 (ESTT…TTSV), 2888–2914 (TFHS…TEES), and 2921–2934 (PAST…TLTT). 2 stretches are compositionally biased toward low complexity: residues 2941 to 2957 (STTF…TLSP) and 2968 to 2995 (ESTP…SLSE). The segment covering 2996 to 3005 (KSTTFYTSPR) has biased composition (polar residues). Positions 3015–3038 (TTTSSGVSEESSTSHSQPGSTHTT) are enriched in low complexity. The stretch at 3023–3041 (EESSTSHSQPGSTHTTAFP) is repeat 16. Polar residues predominate over residues 3040 to 3094 (FPDSTTTSGLSQEPTASHSSQGSTEATLSPGSTTASSLGQQSTTFHSSPGDTETT). Over residues 3109-3125 (STPTHSSTGSLHTTLTP) the composition is skewed to low complexity. Composition is skewed to polar residues over residues 3126–3143 (ASST…FQSW) and 3163–3187 (VSTT…TTLG). Repeat 17 spans residues 3190-3208 (EESTTVHSSPGATGTALFP). Residues 3210–3265 (RSATSVLVGEPTTSPISSGSTETTALPGSTTTAGLSEKSTTFYSSPRSPDTTLSPA) show a composition bias toward polar residues. Positions 3266–3281 (STTSSGVSEESTTSHS) are enriched in low complexity. Repeat unit 18 spans residues 3274–3292 (EESTTSHSRPGSTHTTAFP). Polar residues-rich tracts occupy residues 3282–3354 (RPGS…TTAS) and 3362–3397 (PVHS…NSKD). Residue asparagine 3350 is glycosylated (N-linked (GlcNAc...) asparagine). 2 stretches are compositionally biased toward low complexity: residues 3413-3434 (STTS…SSTT) and 3446-3463 (SSPV…STTS). Tandem repeats lie at residues 3439–3457 (EEST…TPSP) and 3467–3485 (EEST…MHFP). The span at 3468–3482 (ESTTYHSSPGSTQTM) shows a compositional bias: polar residues. Over residues 3499-3517 (TSHSSTTHTISSAPSTTSA) the composition is skewed to low complexity. 2 stretches are compositionally biased toward polar residues: residues 3524–3539 (SYHS…HFPD) and 3568–3610 (RSTT…TTFH). Residues 3611–3639 (SSPRSPATTLSPASTTSSGVSEESTTSHS) show a composition bias toward low complexity. Residues 3632–3650 (EESTTSHSRPGSTHTTAFP) form repeat 21. The span at 3640–3661 (RPGSTHTTAFPDSTTTPGLSRH) shows a compositional bias: polar residues. Residues 3662–3705 (STTSHSSPGSTDTTLLPASTTTSGSSQESTTSHSSSGSTDTALS) are compositionally biased toward low complexity. Composition is skewed to polar residues over residues 3706 to 3741 (PGST…TSSG) and 3748 to 3778 (RVHS…TAFQ). The segment covering 3779-3797 (THPASTHTTPSPPSTATAP) has biased composition (low complexity). Copy 22 of the repeat occupies 3799 to 3817 (EESTTYHRSPGSTPTTHFP). Polar residues-rich tracts occupy residues 3800–3824 (ESTT…TTSG) and 3831–3847 (IFHS…SSAH). Composition is skewed to low complexity over residues 3848 to 3860 (STTS…TTSR), 3869 to 3881 (TTLP…PGLS), and 3889 to 3902 (SSPR…SPAS). 3 stretches are compositionally biased toward polar residues: residues 3911–3963 (ESTT…TTTS), 3971–3997 (TFHS…TEES), and 4004–4017 (PAST…TLTT). Low complexity-rich tracts occupy residues 4024-4036 (STTF…STGT) and 4051-4078 (ESTP…SLSE). The span at 4079–4088 (KSTTFYTSPR) shows a compositional bias: polar residues. Low complexity predominate over residues 4098–4121 (TTTSSGVSEESSTSHSQPGSTHTT). Residues 4106-4124 (EESSTSHSQPGSTHTTAFP) form repeat 23. Residues 4123–4177 (FPDSTTTSGLSQEPTTSHSSQGSTEATLSPGSTTASSLGQQSTTFHSSPGDTETT) show a composition bias toward polar residues. Over residues 4192-4208 (STPTHSSTGSLHTTLTP) the composition is skewed to low complexity. The span at 4209–4226 (ASSTSTGLQEESTTFQSW) shows a compositional bias: polar residues. A compositionally biased stretch (low complexity) spans 4227–4249 (PSSSDTTPSPPSTTAVPVEVSTT). Over residues 4250 to 4270 (YHSRPSSTPTTHFSASSTTLG) the composition is skewed to polar residues. The stretch at 4273–4291 (EESTTVHSSPGATGTALFP) is repeat 24. Residues 4293–4348 (RSATSVLVGEPTTSPISSGSTETTALPGSTTTAGLSEKSTTFYSSPRSPDTTLSPA) are compositionally biased toward polar residues. Over residues 4349-4364 (STTSSGVSEESTTSHS) the composition is skewed to low complexity. Composition is skewed to polar residues over residues 4369–4437 (MHTT…TTAS) and 4445–4480 (PVHS…NSKD). An N-linked (GlcNAc...) asparagine glycan is attached at asparagine 4433. 2 stretches are compositionally biased toward low complexity: residues 4496–4517 (STTS…SSTT) and 4529–4546 (SSPV…STTS). 2 tandem repeats follow at residues 4522–4540 (EEST…TPSP) and 4550–4568 (EEST…MHFP). The span at 4551-4571 (ESTTYHSSPGSTQTMHFPESN) shows a compositional bias: polar residues. An N-linked (GlcNAc...) asparagine glycan is attached at asparagine 4571. Positions 4582–4600 (TSHSSTTHTISSAPSTTSA) are enriched in low complexity. Polar residues-rich tracts occupy residues 4607–4622 (SYHS…HFPD) and 4651–4688 (RSTT…LSEK). 2 stretches are compositionally biased toward low complexity: residues 4689 to 4710 (STTF…SSTT) and 4722 to 4739 (SSPV…STTS). 2 tandem repeats follow at residues 4715 to 4733 (EEST…TPSP) and 4743 to 4761 (EEST…MHFP). The span at 4747-4768 (AYHSSPGSTQTMHFPESSTASG) shows a compositional bias: polar residues. Residues 4776–4792 (SHSSTTHTISSPPSTTS) are compositionally biased toward low complexity. 2 stretches are compositionally biased toward polar residues: residues 4800–4814 (SYHS…THFP) and 4887–4917 (SSRS…SQAE). Positions 4918 to 4931 (STHTTAFPASTTTS) are enriched in low complexity. 2 stretches are compositionally biased toward polar residues: residues 4932–5024 (GLSQ…STPF) and 5048–5061 (STAF…TGTT). The span at 5094–5112 (SSSTSGLTEESTTFHTSPS) shows a compositional bias: low complexity. The EGF-like domain occupies 5116-5154 (TIVSTESLETLAPGLCQEGQIWNGKQCVCPQGYVGYQCL). A disulfide bond links cysteine 5144 and cysteine 5153. Residues 5168–5275 (LNATLGMTVK…TRTTLLDPDS (108 aa)) form the SEA domain. N-linked (GlcNAc...) asparagine glycosylation is found at asparagine 5169, asparagine 5182, asparagine 5197, asparagine 5228, and asparagine 5264. A Cleavage motif motif is present at residues 5226-5233 (LLNGSIVV). The helical transmembrane segment at 5381–5401 (GIVGAVMAVLLLALIILIILF) threads the bilayer. The Cytoplasmic portion of the chain corresponds to 5402 to 5478 (SLSQRKRHRE…QRPEMVASTV (77 aa)).

Ubiquitous, with higher expression in colon. Down-regulated in colorectal cancer as well as in the colon of patients with ulcerative colitis (UC) and Crohn's disease (CD).

It is found in the membrane. Functionally, involved in epithelial cell protection, adhesion modulation, and signaling. May be involved in epithelial cell growth regulation. Stimulated by both cytokine TNF-alpha and TGF-beta in intestinal epithelium. This chain is Mucin-12 (MUC12), found in Homo sapiens (Human).